The following is a 582-amino-acid chain: ATP-dependent lipid A-core flippase (582 aa).

6 helical membrane-spanning segments follow: residues 27–48 (LVVS…ISLL), 63–85 (FLRI…GFAS), 144–168 (VSIV…WQLS), 170–188 (VLIV…VSKR), 244–266 (LVSA…LFAV), and 283–302 (TFTV…KALT). One can recognise an ABC transmembrane type-1 domain in the interval 28 to 310 (VVSTIALVIN…LTSVTSEFQR (283 aa)). The region spanning 342–578 (VDVKDVTFTY…DGAYAQLHRI (237 aa)) is the ABC transporter domain. Residue 376–383 (GRSGSGKS) participates in ATP binding.

The protein belongs to the ABC transporter superfamily. Lipid exporter (TC 3.A.1.106) family. As to quaternary structure, homodimer.

It localises to the cell inner membrane. It carries out the reaction ATP + H2O + lipid A-core oligosaccharideSide 1 = ADP + phosphate + lipid A-core oligosaccharideSide 2.. Its function is as follows. Involved in lipopolysaccharide (LPS) biosynthesis. Translocates lipid A-core from the inner to the outer leaflet of the inner membrane. Transmembrane domains (TMD) form a pore in the inner membrane and the ATP-binding domain (NBD) is responsible for energy generation. Shows ATPase activity. This is ATP-dependent lipid A-core flippase from Vibrio cholerae serotype O1 (strain ATCC 39315 / El Tor Inaba N16961).